We begin with the raw amino-acid sequence, 157 residues long: SsrA-binding protein (157 aa).

This sequence belongs to the SmpB family.

It is found in the cytoplasm. Its function is as follows. Required for rescue of stalled ribosomes mediated by trans-translation. Binds to transfer-messenger RNA (tmRNA), required for stable association of tmRNA with ribosomes. tmRNA and SmpB together mimic tRNA shape, replacing the anticodon stem-loop with SmpB. tmRNA is encoded by the ssrA gene; the 2 termini fold to resemble tRNA(Ala) and it encodes a 'tag peptide', a short internal open reading frame. During trans-translation Ala-aminoacylated tmRNA acts like a tRNA, entering the A-site of stalled ribosomes, displacing the stalled mRNA. The ribosome then switches to translate the ORF on the tmRNA; the nascent peptide is terminated with the 'tag peptide' encoded by the tmRNA and targeted for degradation. The ribosome is freed to recommence translation, which seems to be the essential function of trans-translation. The sequence is that of SsrA-binding protein from Clostridium novyi (strain NT).